Reading from the N-terminus, the 852-residue chain is Envelope glycoprotein gp160 (852 aa).

Positions 1–31 (MRARETRKNYQCLWRWGTMLLGMLMICSAAE) are cleaved as a signal peptide. Residues 32–680 (NLWVTVYYGV…ITNWLWYIRI (649 aa)) are Extracellular-facing. A disulfide bridge links cysteine 53 with cysteine 73. 9 N-linked (GlcNAc...) asparagine; by host glycosylation sites follow: asparagine 87, asparagine 129, asparagine 136, asparagine 141, asparagine 142, asparagine 155, asparagine 159, asparagine 189, and asparagine 198. 5 disulfides stabilise this stretch: cysteine 118/cysteine 206, cysteine 125/cysteine 197, cysteine 130/cysteine 156, cysteine 219/cysteine 248, and cysteine 229/cysteine 240. A V1 region spans residues 130 to 155 (CTDYLGNATNTNNSSGGTVEKEEIKN). The tract at residues 156-197 (CSFNITTGIRDKVQKAYAYFYKLDVVPIDDDNTNTSYRLIHC) is V2. Residues asparagine 242, asparagine 263, asparagine 277, asparagine 290, and asparagine 296 are each glycosylated (N-linked (GlcNAc...) asparagine; by host). The tract at residues 297 to 330 (CTRPNNNRRRRITSGPGKVLYTTGEIIGDIRKAY) is V3. Residues cysteine 297 and cysteine 331 are joined by a disulfide bond. Residues asparagine 332, asparagine 339, and asparagine 355 are each glycosylated (N-linked (GlcNAc...) asparagine; by host). A CD4-binding loop region spans residues 363 to 373 (SSGGDPEIVMH). Disulfide bonds link cysteine 377–cysteine 439 and cysteine 384–cysteine 412. The V4 stretch occupies residues 384–412 (CNTTKLFNSTWNENSTWNATGNDTITLPC). N-linked (GlcNAc...) asparagine; by host glycans are attached at residues asparagine 385, asparagine 391, asparagine 397, asparagine 401, asparagine 405, asparagine 442, and asparagine 457. V5 stretches follow at residues 455–466 (DKNSTTEIFRPA) and 457–466 (NSTTEIFRPA). A fusion peptide region spans residues 507-528 (AVGVIGAMFLGFLGAAGSTMGA). An immunosuppression region spans residues 570–588 (KQLQARVLAVERYLRDQQL). A disulfide bridge connects residues cysteine 594 and cysteine 600. 4 N-linked (GlcNAc...) asparagine; by host glycosylation sites follow: asparagine 607, asparagine 612, asparagine 621, and asparagine 633. The stretch at 629-663 (REIDNYTSLIYTLLEESQNQQEKNEQELLELDKWA) forms a coiled coil. The interval 658-679 (ELDKWASLWNWFSITNWLWYIR) is MPER; binding to GalCer. Residues 681–701 (FIMIVGGLIGLRIIFAVLSIV) traverse the membrane as a helical segment. At 702-852 (NRVRQGYSPL…IRQGFERALL (151 aa)) the chain is on the cytoplasmic side. The short motif at 708–711 (YSPL) is the YXXL motif; contains endocytosis signal element. The segment at 717–739 (IPAQRGPDRPEGIEEGGGERDRD) is disordered. Residues 722-739 (GPDRPEGIEEGGGERDRD) are compositionally biased toward basic and acidic residues. Cysteine 760 is lipidated: S-palmitoyl cysteine; by host. Residues 851–852 (LL) carry the Di-leucine internalization motif motif.

This sequence belongs to the HIV-1 env protein family. The mature envelope protein (Env) consists of a homotrimer of non-covalently associated gp120-gp41 heterodimers. The resulting complex protrudes from the virus surface as a spike. There seems to be as few as 10 spikes on the average virion. Interacts with host CD4, CCR5 and CXCR4. Gp120 also interacts with the C-type lectins CD209/DC-SIGN and CLEC4M/DC-SIGNR (collectively referred to as DC-SIGN(R)). Gp120 and gp41 interact with GalCer. Gp120 interacts with host ITGA4/ITGB7 complex; on CD4+ T-cells, this interaction results in rapid activation of integrin ITGAL/LFA-1, which facilitates efficient cell-to-cell spreading of HIV-1. Gp120 interacts with cell-associated heparan sulfate; this interaction increases virus infectivity on permissive cells and may be involved in infection of CD4- cells. In terms of assembly, the mature envelope protein (Env) consists of a homotrimer of non-covalently associated gp120-gp41 heterodimers. The resulting complex protrudes from the virus surface as a spike. There seems to be as few as 10 spikes on the average virion. Post-translationally, highly glycosylated by host. The high number of glycan on the protein is reffered to as 'glycan shield' because it contributes to hide protein sequence from adaptive immune system. In terms of processing, palmitoylation of the transmembrane protein and of Env polyprotein (prior to its proteolytic cleavage) is essential for their association with host cell membrane lipid rafts. Palmitoylation is therefore required for envelope trafficking to classical lipid rafts, but not for viral replication. Specific enzymatic cleavages in vivo yield mature proteins. Envelope glycoproteins are synthesized as an inactive precursor that is heavily N-glycosylated and processed likely by host cell furin in the Golgi to yield the mature SU and TM proteins. The cleavage site between SU and TM requires the minimal sequence [KR]-X-[KR]-R. About 2 of the 9 disulfide bonds of gp41 are reduced by P4HB/PDI, following binding to CD4 receptor.

It localises to the virion membrane. The protein resides in the host cell membrane. Its subcellular location is the host endosome membrane. In terms of biological role, oligomerizes in the host endoplasmic reticulum into predominantly trimers. In a second time, gp160 transits in the host Golgi, where glycosylation is completed. The precursor is then proteolytically cleaved in the trans-Golgi and thereby activated by cellular furin or furin-like proteases to produce gp120 and gp41. Functionally, attaches the virus to the host lymphoid cell by binding to the primary receptor CD4. This interaction induces a structural rearrangement creating a high affinity binding site for a chemokine coreceptor like CXCR4 and/or CCR5. Acts as a ligand for CD209/DC-SIGN and CLEC4M/DC-SIGNR, which are respectively found on dendritic cells (DCs), and on endothelial cells of liver sinusoids and lymph node sinuses. These interactions allow capture of viral particles at mucosal surfaces by these cells and subsequent transmission to permissive cells. HIV subverts the migration properties of dendritic cells to gain access to CD4+ T-cells in lymph nodes. Virus transmission to permissive T-cells occurs either in trans (without DCs infection, through viral capture and transmission), or in cis (following DCs productive infection, through the usual CD4-gp120 interaction), thereby inducing a robust infection. In trans infection, bound virions remain infectious over days and it is proposed that they are not degraded, but protected in non-lysosomal acidic organelles within the DCs close to the cell membrane thus contributing to the viral infectious potential during DCs' migration from the periphery to the lymphoid tissues. On arrival at lymphoid tissues, intact virions recycle back to DCs' cell surface allowing virus transmission to CD4+ T-cells. Acts as a class I viral fusion protein. Under the current model, the protein has at least 3 conformational states: pre-fusion native state, pre-hairpin intermediate state, and post-fusion hairpin state. During fusion of viral and target intracellular membranes, the coiled coil regions (heptad repeats) assume a trimer-of-hairpins structure, positioning the fusion peptide in close proximity to the C-terminal region of the ectodomain. The formation of this structure appears to drive apposition and subsequent fusion of viral and target cell membranes. Complete fusion occurs in host cell endosomes and is dynamin-dependent, however some lipid transfer might occur at the plasma membrane. The virus undergoes clathrin-dependent internalization long before endosomal fusion, thus minimizing the surface exposure of conserved viral epitopes during fusion and reducing the efficacy of inhibitors targeting these epitopes. Membranes fusion leads to delivery of the nucleocapsid into the cytoplasm. This is Envelope glycoprotein gp160 from Human immunodeficiency virus type 1 group M subtype B (isolate SF33) (HIV-1).